Consider the following 364-residue polypeptide: DNA polymerase IV (364 aa).

A UmuC domain is found at 14–198; sequence IIHIDMDAFF…LPIEKFHGVG (185 aa). Mg(2+) is bound by residues Asp-18 and Asp-116. Glu-117 is an active-site residue.

This sequence belongs to the DNA polymerase type-Y family. In terms of assembly, monomer. The cofactor is Mg(2+).

The protein localises to the cytoplasm. It carries out the reaction DNA(n) + a 2'-deoxyribonucleoside 5'-triphosphate = DNA(n+1) + diphosphate. In terms of biological role, poorly processive, error-prone DNA polymerase involved in untargeted mutagenesis. Copies undamaged DNA at stalled replication forks, which arise in vivo from mismatched or misaligned primer ends. These misaligned primers can be extended by PolIV. Exhibits no 3'-5' exonuclease (proofreading) activity. May be involved in translesional synthesis, in conjunction with the beta clamp from PolIII. The chain is DNA polymerase IV from Streptococcus pyogenes serotype M2 (strain MGAS10270).